The primary structure comprises 598 residues: Arylsulfatase J (598 aa).

Positions 1–47 are cleaved as a signal peptide; that stretch reads MAPRDSAEPLPPLSPQAWAWSGKFLAMGALAGFSVLSLLTYGYLCWG. Residues aspartate 82, aspartate 83, and cysteine 120 each contribute to the Ca(2+) site. Cysteine 120 acts as the Nucleophile in catalysis. Position 120 is a 3-oxoalanine (Cys) (cysteine 120). The N-linked (GlcNAc...) asparagine glycan is linked to asparagine 155. Lysine 174 contacts substrate. Histidine 176 is an active-site residue. Residue histidine 267 coordinates substrate. 2 N-linked (GlcNAc...) asparagine glycosylation sites follow: asparagine 304 and asparagine 316. Residues aspartate 325 and asparagine 326 each coordinate Ca(2+). Lysine 343 is a substrate binding site. 4 N-linked (GlcNAc...) asparagine glycosylation sites follow: asparagine 429, asparagine 495, asparagine 525, and asparagine 563. A disordered region spans residues 532-598; the sequence is RYPPKDPRSN…IKCHPSVATG (67 aa). Over residues 559–583 the composition is skewed to basic residues; that stretch reads KKKSNKTKAKKMQKKKSKARMRKQL.

It belongs to the sulfatase family. Ca(2+) is required as a cofactor. The conversion to 3-oxoalanine (also known as C-formylglycine, FGly), of a serine or cysteine residue in prokaryotes and of a cysteine residue in eukaryotes, is critical for catalytic activity.

It is found in the secreted. This Mus musculus (Mouse) protein is Arylsulfatase J (Arsj).